We begin with the raw amino-acid sequence, 220 residues long: Redox-sensing transcriptional repressor Rex (220 aa).

Residues 16-55 constitute a DNA-binding region (H-T-H motif); the sequence is MYVQVLETLKREGSQVVSSELLARTCSVNPSQIRKDLAYF. Position 90–95 (90–95) interacts with NAD(+); the sequence is GIGNLG.

This sequence belongs to the transcriptional regulatory Rex family. Homodimer.

It localises to the cytoplasm. Its function is as follows. Modulates transcription in response to changes in cellular NADH/NAD(+) redox state. The protein is Redox-sensing transcriptional repressor Rex of Solidesulfovibrio magneticus (strain ATCC 700980 / DSM 13731 / RS-1) (Desulfovibrio magneticus).